The primary structure comprises 354 residues: Holliday junction branch migration complex subunit RuvB (354 aa).

The tract at residues 4-191 is large ATPase domain (RuvB-L); the sequence is TDKLAAPARV…FGIVARLEFY (188 aa). Residues Leu30, Arg31, Gly72, Lys75, Thr76, Thr77, 138–140, Arg181, Tyr191, and Arg228 contribute to the ATP site; that span reads EDY. Thr76 contributes to the Mg(2+) binding site. The tract at residues 192–262 is small ATPAse domain (RuvB-S); sequence TAEELARIVT…MADAALAMLD (71 aa). The head domain (RuvB-H) stretch occupies residues 265-354; that stretch reads RVGFDLMDRK…GDAGELFGDA (90 aa). Residues Arg301, Arg320, and Arg325 each coordinate DNA.

Belongs to the RuvB family. In terms of assembly, homohexamer. Forms an RuvA(8)-RuvB(12)-Holliday junction (HJ) complex. HJ DNA is sandwiched between 2 RuvA tetramers; dsDNA enters through RuvA and exits via RuvB. An RuvB hexamer assembles on each DNA strand where it exits the tetramer. Each RuvB hexamer is contacted by two RuvA subunits (via domain III) on 2 adjacent RuvB subunits; this complex drives branch migration. In the full resolvosome a probable DNA-RuvA(4)-RuvB(12)-RuvC(2) complex forms which resolves the HJ.

The protein localises to the cytoplasm. The enzyme catalyses ATP + H2O = ADP + phosphate + H(+). Functionally, the RuvA-RuvB-RuvC complex processes Holliday junction (HJ) DNA during genetic recombination and DNA repair, while the RuvA-RuvB complex plays an important role in the rescue of blocked DNA replication forks via replication fork reversal (RFR). RuvA specifically binds to HJ cruciform DNA, conferring on it an open structure. The RuvB hexamer acts as an ATP-dependent pump, pulling dsDNA into and through the RuvAB complex. RuvB forms 2 homohexamers on either side of HJ DNA bound by 1 or 2 RuvA tetramers; 4 subunits per hexamer contact DNA at a time. Coordinated motions by a converter formed by DNA-disengaged RuvB subunits stimulates ATP hydrolysis and nucleotide exchange. Immobilization of the converter enables RuvB to convert the ATP-contained energy into a lever motion, pulling 2 nucleotides of DNA out of the RuvA tetramer per ATP hydrolyzed, thus driving DNA branch migration. The RuvB motors rotate together with the DNA substrate, which together with the progressing nucleotide cycle form the mechanistic basis for DNA recombination by continuous HJ branch migration. Branch migration allows RuvC to scan DNA until it finds its consensus sequence, where it cleaves and resolves cruciform DNA. The chain is Holliday junction branch migration complex subunit RuvB from Cupriavidus taiwanensis (strain DSM 17343 / BCRC 17206 / CCUG 44338 / CIP 107171 / LMG 19424 / R1) (Ralstonia taiwanensis (strain LMG 19424)).